The sequence spans 86 residues: RNA-binding protein Hfq (86 aa).

The region spanning 9–68 is the Sm domain; it reads DPYLNTLRKEKVGVSIYLVNGIKLQGTIESFDQFVILLKNTVSQMVYKHAISTVVPVRPI.

This sequence belongs to the Hfq family. Homohexamer.

In terms of biological role, RNA chaperone that binds small regulatory RNA (sRNAs) and mRNAs to facilitate mRNA translational regulation in response to envelope stress, environmental stress and changes in metabolite concentrations. Also binds with high specificity to tRNAs. The chain is RNA-binding protein Hfq from Pseudomonas fluorescens (strain Pf0-1).